The chain runs to 350 residues: GTPase Obg (350 aa).

The region spanning Met-1–Leu-159 is the Obg domain. The segment at Gly-126–Gly-147 is disordered. Residues Ala-160 to Asp-337 enclose the OBG-type G domain. GTP contacts are provided by residues Gly-166–Ser-173, Phe-191–Tyr-195, Asp-213–Gly-216, Asn-287–Asp-290, and Ser-318–Leu-320. Positions 173 and 193 each coordinate Mg(2+).

This sequence belongs to the TRAFAC class OBG-HflX-like GTPase superfamily. OBG GTPase family. Monomer. The cofactor is Mg(2+).

The protein localises to the cytoplasm. An essential GTPase which binds GTP, GDP and possibly (p)ppGpp with moderate affinity, with high nucleotide exchange rates and a fairly low GTP hydrolysis rate. Plays a role in control of the cell cycle, stress response, ribosome biogenesis and in those bacteria that undergo differentiation, in morphogenesis control. The protein is GTPase Obg of Stenotrophomonas maltophilia (strain K279a).